Reading from the N-terminus, the 228-residue chain is UPF0173 metal-dependent hydrolase PTH_1415 (228 aa).

Belongs to the UPF0173 family.

This is UPF0173 metal-dependent hydrolase PTH_1415 from Pelotomaculum thermopropionicum (strain DSM 13744 / JCM 10971 / SI).